Here is a 191-residue protein sequence, read N- to C-terminus: 3-isopropylmalate dehydratase small subunit (191 aa).

It belongs to the LeuD family. LeuD type 1 subfamily. As to quaternary structure, heterodimer of LeuC and LeuD.

It carries out the reaction (2R,3S)-3-isopropylmalate = (2S)-2-isopropylmalate. Its pathway is amino-acid biosynthesis; L-leucine biosynthesis; L-leucine from 3-methyl-2-oxobutanoate: step 2/4. In terms of biological role, catalyzes the isomerization between 2-isopropylmalate and 3-isopropylmalate, via the formation of 2-isopropylmaleate. The chain is 3-isopropylmalate dehydratase small subunit from Staphylococcus haemolyticus (strain JCSC1435).